The primary structure comprises 1049 residues: Protein argonaute 12 (1049 aa).

Gly residues predominate over residues 1–53; the sequence is MSSRGGGGGGRRGGRGGGGGREGGGGGGGGGGRGGQGRGDLGVVGERQGGGRG. Disordered regions lie at residues 1–101 and 144–192; these read MSSR…GVQV and GGAP…KAVT. Residues 54 to 65 are compositionally biased toward basic and acidic residues; sequence AGERGGRHDAPR. A compositionally biased stretch (gly residues) spans 66–76; sequence GRGGVAVGAGA. Over residues 144–160 the composition is skewed to low complexity; the sequence is GGAPPAGQGSSLAAAQG. The region spanning 404-515 is the PAZ domain; the sequence is PVMDFAVQYL…LPMEVCSILE (112 aa). Residues 694-1012 enclose the Piwi domain; the sequence is LLIVILTEIS…GAFRARYYME (319 aa).

It belongs to the argonaute family. Ago subfamily.

Functionally, probably involved in the RNA silencing pathway. May bind to short RNAs such as microRNAs (miRNAs) or short interfering RNAs (siRNAs), and represses the translation of mRNAs which are complementary to them. This chain is Protein argonaute 12 (AGO12), found in Oryza sativa subsp. japonica (Rice).